Reading from the N-terminus, the 560-residue chain is DNA ligase B (560 aa).

Lys124 (N6-AMP-lysine intermediate) is an active-site residue.

It belongs to the NAD-dependent DNA ligase family. LigB subfamily.

The catalysed reaction is NAD(+) + (deoxyribonucleotide)n-3'-hydroxyl + 5'-phospho-(deoxyribonucleotide)m = (deoxyribonucleotide)n+m + AMP + beta-nicotinamide D-nucleotide.. In terms of biological role, catalyzes the formation of phosphodiester linkages between 5'-phosphoryl and 3'-hydroxyl groups in double-stranded DNA using NAD as a coenzyme and as the energy source for the reaction. The chain is DNA ligase B from Escherichia coli O1:K1 / APEC.